The primary structure comprises 501 residues: ATP synthase subunit alpha (501 aa).

Residue 169–176 participates in ATP binding; it reads GDRQTGKT.

It belongs to the ATPase alpha/beta chains family. F-type ATPases have 2 components, CF(1) - the catalytic core - and CF(0) - the membrane proton channel. CF(1) has five subunits: alpha(3), beta(3), gamma(1), delta(1), epsilon(1). CF(0) has three main subunits: a(1), b(2) and c(9-12). The alpha and beta chains form an alternating ring which encloses part of the gamma chain. CF(1) is attached to CF(0) by a central stalk formed by the gamma and epsilon chains, while a peripheral stalk is formed by the delta and b chains.

Its subcellular location is the cell inner membrane. It catalyses the reaction ATP + H2O + 4 H(+)(in) = ADP + phosphate + 5 H(+)(out). In terms of biological role, produces ATP from ADP in the presence of a proton gradient across the membrane. The alpha chain is a regulatory subunit. This is ATP synthase subunit alpha from Campylobacter jejuni subsp. jejuni serotype O:6 (strain 81116 / NCTC 11828).